The chain runs to 207 residues: Large ribosomal subunit protein bL25 (207 aa).

The segment at 185–207 is disordered; it reads DLEEETGEAAAEAEAPAEEGAES.

The protein belongs to the bacterial ribosomal protein bL25 family. CTC subfamily. Part of the 50S ribosomal subunit; part of the 5S rRNA/L5/L18/L25 subcomplex. Contacts the 5S rRNA. Binds to the 5S rRNA independently of L5 and L18.

This is one of the proteins that binds to the 5S RNA in the ribosome where it forms part of the central protuberance. The protein is Large ribosomal subunit protein bL25 of Rhodococcus jostii (strain RHA1).